The following is a 287-amino-acid chain: Ethylene-inducing xylanase 3 (287 aa).

Positions 1 to 19 are cleaved as a signal peptide; that stretch reads MVCFSSLFVAASAIAVVFA. Positions 31–219 constitute a GH11 domain; the sequence is QSTPSSQGTH…SSGSARINVA (189 aa). Glu115 functions as the Nucleophile in the catalytic mechanism. Glu206 (proton donor) is an active-site residue. A CBM1 domain is found at 252-287; it reads SCAARWGQCGGSGWNGATCCSAGTCQAQNQWYSQCL.

Belongs to the glycosyl hydrolase 11 (cellulase G) family.

The enzyme catalyses Endohydrolysis of (1-&gt;4)-beta-D-xylosidic linkages in xylans.. Its pathway is glycan degradation; xylan degradation. Endo-1,4-beta-xylanase involved in the hydrolysis of xylan, a major structural heterogeneous polysaccharide found in plant biomass representing the second most abundant polysaccharide in the biosphere, after cellulose. Exhibits immunity-inducing activity and induces cell death in Nicotiana benthamiana. The chain is Ethylene-inducing xylanase 3 from Verticillium longisporum (Verticillium dahliae var. longisporum).